A 353-amino-acid polypeptide reads, in one-letter code: Lysophosphatidic acid receptor 3 (353 aa).

At 1 to 31 (MNECHYDKHMDFFYNRSNTDTVDDWTGTKLV) the chain is on the extracellular side. Asparagine 15 carries an N-linked (GlcNAc...) asparagine glycan. Residues 32–52 (IVLCVGTFFCLFIFFSNSLVI) form a helical membrane-spanning segment. The Cytoplasmic portion of the chain corresponds to 53-67 (AAVIKNRKFHFPFYY). The chain crosses the membrane as a helical span at residues 68–88 (LLANLAAADFFAGIAYVFLMF). Residues 89-101 (NTGPVSKTLTVNR) lie on the Extracellular side of the membrane. Residues 102–124 (WFLRQGLLDSSLTASLTNLLVIA) form a helical membrane-spanning segment. The Cytoplasmic portion of the chain corresponds to 125–146 (VERHMSIMRMRVHSNLTKKRVT). A helical transmembrane segment spans residues 147–167 (LLILLVWAIAIFMGAVPTLGW). Over 168–186 (NCLCNISACSSLAPIYSRS) the chain is Extracellular. The N-linked (GlcNAc...) asparagine glycan is linked to asparagine 172. The helical transmembrane segment at 187–207 (YLVFWTVSNLMAFLIMVVVYL) threads the bilayer. The Cytoplasmic segment spans residues 208 to 240 (RIYVYVKRKTNVLSPHTSGSISRRRTPMKLMKT). Residues 241-261 (VMTVLGAFVVCWTPGLVVLLL) form a helical membrane-spanning segment. Over 262–276 (DGLNCRQCGVQHVKR) the chain is Extracellular. The helical transmembrane segment at 277–297 (WFLLLALLNSVVNPIIYSYKD) threads the bilayer. The Cytoplasmic segment spans residues 298–353 (EDMYGTMKKMICCFSQENPERRPSRIPSTVLSRSDTGSQYIEDSISQGAVCNKSTS). Residue cysteine 309 is the site of S-palmitoyl cysteine attachment.

Belongs to the G-protein coupled receptor 1 family. As to expression, most abundantly expressed in prostate, testes, pancreas, and heart, with moderate levels in lung and ovary. No detectable expression in brain, placenta, liver, skeletal muscle, kidney, spleen, thymus, small intestine, colon, or peripheral blood leukocytes.

Its subcellular location is the cell membrane. Functionally, receptor for lysophosphatidic acid (LPA), a mediator of diverse cellular activities. May play a role in the development of ovarian cancer. Seems to be coupled to the G(i)/G(o) and G(q) families of heteromeric G proteins. The polypeptide is Lysophosphatidic acid receptor 3 (LPAR3) (Homo sapiens (Human)).